The sequence spans 246 residues: Orotidine 5'-phosphate decarboxylase (246 aa).

Substrate-binding positions include Asp18, Lys39, 66–75 (DLKFHDIPAT), Thr130, Arg192, Gln201, Gly221, and Arg222. Lys68 acts as the Proton donor in catalysis.

Belongs to the OMP decarboxylase family. Type 1 subfamily. In terms of assembly, homodimer.

The enzyme catalyses orotidine 5'-phosphate + H(+) = UMP + CO2. It participates in pyrimidine metabolism; UMP biosynthesis via de novo pathway; UMP from orotate: step 2/2. In terms of biological role, catalyzes the decarboxylation of orotidine 5'-monophosphate (OMP) to uridine 5'-monophosphate (UMP). The sequence is that of Orotidine 5'-phosphate decarboxylase from Parasynechococcus marenigrum (strain WH8102).